We begin with the raw amino-acid sequence, 303 residues long: GTPase Era (303 aa).

Residues 8–176 (YCGFIAIVGR…ASIVRKHMPE (169 aa)) enclose the Era-type G domain. Residues 16–23 (GRPNVGKS) form a G1 region. Position 16 to 23 (16 to 23 (GRPNVGKS)) interacts with GTP. Residues 42 to 46 (QTTRH) are G2. The G3 stretch occupies residues 63-66 (DTPG). Residues 63-67 (DTPGL) and 125-128 (NKVD) contribute to the GTP site. The G4 stretch occupies residues 125–128 (NKVD). Residues 155-157 (ISA) form a G5 region. The 78-residue stretch at 207 to 284 (LGEELPYSVT…HLELWVKVKS (78 aa)) folds into the KH type-2 domain.

The protein belongs to the TRAFAC class TrmE-Era-EngA-EngB-Septin-like GTPase superfamily. Era GTPase family. In terms of assembly, monomer.

Its subcellular location is the cytoplasm. The protein localises to the cell inner membrane. In terms of biological role, an essential GTPase that binds both GDP and GTP, with rapid nucleotide exchange. Plays a role in 16S rRNA processing and 30S ribosomal subunit biogenesis and possibly also in cell cycle regulation and energy metabolism. The sequence is that of GTPase Era from Yersinia enterocolitica serotype O:8 / biotype 1B (strain NCTC 13174 / 8081).